The chain runs to 219 residues: Probable nicotinate-nucleotide adenylyltransferase (219 aa).

Belongs to the NadD family.

The enzyme catalyses nicotinate beta-D-ribonucleotide + ATP + H(+) = deamido-NAD(+) + diphosphate. Its pathway is cofactor biosynthesis; NAD(+) biosynthesis; deamido-NAD(+) from nicotinate D-ribonucleotide: step 1/1. In terms of biological role, catalyzes the reversible adenylation of nicotinate mononucleotide (NaMN) to nicotinic acid adenine dinucleotide (NaAD). This is Probable nicotinate-nucleotide adenylyltransferase from Erythrobacter litoralis (strain HTCC2594).